The chain runs to 213 residues: Urease accessory protein UreE (213 aa).

Residues 170-213 (EHHGHSHSHSHSHSHDHDHDHDHDHDHDHQHGPSCSHGHHHGHR) form a disordered region. Over residues 182-200 (HSHDHDHDHDHDHDHDHQH) the composition is skewed to basic and acidic residues.

Belongs to the UreE family.

It localises to the cytoplasm. Involved in urease metallocenter assembly. Binds nickel. Probably functions as a nickel donor during metallocenter assembly. The protein is Urease accessory protein UreE of Burkholderia mallei (strain NCTC 10229).